Consider the following 324-residue polypeptide: MAMEIGEDEWKVCCGSSEFAKQMSTSGPLTSQEAIYTARDIWFNQVNVTDWLEAFSAHPQIGNTPSPSINSDFARRSVSEQSTAFATTSASALQELAEWNVLYKKKFGFIFIICASGRTHAEMLHALKERYENRPIVELEIAAMEQMKITELRMAKLFSDKAKVISETDSSSSPVSTKPQDRLRIIGGHLNVAAEAKAPKRSRPPITTHVLDVSRGAPAAGVEVHLEVWSGTTGPSFVHGGGGVWSSVGTSATDRDGRSGPLMDLVDALNPGTYRISFDTAKYSPGCFFPYVSIVFQVTESQKWEHFHVPLLLAPFSFSTYRGS.

An N-acetylalanine modification is found at A2. The interval 2–29 is required for BRI1-binding; the sequence is AMEIGEDEWKVCCGSSEFAKQMSTSGPL. Residues 2 to 161 form an OHCU decarboxylase region; that stretch reads AMEIGEDEWK…LRMAKLFSDK (160 aa). H58 serves as the catalytic Proton donor; for OHCU decarboxylase activity. The (S)-allantoin site is built by H58, P59, E80, F111, I113, and A115. An HIU hydrolase region spans residues 178–324; that stretch reads KPQDRLRIIG…PFSFSTYRGS (147 aa). The Internal peroxisomal targeting signal (PTS2) signature appears at 182–190; it reads RLRIIGGHL.

This sequence in the N-terminal section; belongs to the OHCU decarboxylase family. It in the C-terminal section; belongs to the transthyretin family. 5-hydroxyisourate hydrolase subfamily. In terms of assembly, homodimer. Forms tetramers. Interacts with BRI1 in a kinase-dependent manner. Interacts with B1L. In terms of processing, phosphorylated by BRI1 in vitro. As to expression, expressed ubiquitously with highest levels in flowers buds and elongating inflorescences. In terms of tissue distribution, mainly expressed in stems and leaves, and, to a lower extent, in flowers, flower buds and seedlings. Strongly expressed in flower buds and leaves, to a lower extent in stems, and at low levels in seedlings and flowers.

The protein resides in the cell membrane. It localises to the peroxisome. The protein localises to the cytoplasm. Its subcellular location is the cytosol. It catalyses the reaction 5-hydroxyisourate + H2O = 5-hydroxy-2-oxo-4-ureido-2,5-dihydro-1H-imidazole-5-carboxylate + H(+). The enzyme catalyses 5-hydroxy-2-oxo-4-ureido-2,5-dihydro-1H-imidazole-5-carboxylate + H(+) = (S)-allantoin + CO2. Its pathway is purine metabolism; urate degradation; (S)-allantoin from urate: step 2/3. It functions in the pathway purine metabolism; urate degradation; (S)-allantoin from urate: step 3/3. Involved in the last two steps of the degradation of uric acid, i.e. the hydrolysis of 5-hydroxyisourate (HIU) to 2-oxo-4-hydroxy-4-carboxy-5-ureidoimidazoline (OHCU) and its stereoselective decarboxylation to (S)-allantoin, a major ureide compound. Might function as a negative regulator to modulate brassinosteroid-mediated plant growth. Together with B1L, prevents plant growth and development, but by opposition to B1L, negatively regulates cold tolerance, probably in a brassinosteroid (BR) and allantoin-dependent manner. This Arabidopsis thaliana (Mouse-ear cress) protein is Uric acid degradation bifunctional protein TTL.